A 402-amino-acid chain; its full sequence is Tumor necrosis factor receptor superfamily member 11B (402 aa).

An N-terminal signal peptide occupies residues 1–21 (MNKLLCCALVFLDISIKWTTQ). 4 TNFR-Cys repeats span residues 24 to 62 (FPPKYLHYDPESSRQLMCDKCPPGTFLKQPCTARRKTVC), 64 to 105 (PCPD…NRVC), 106 to 142 (ECEEGRYLELEFCLKHRSCPPGFGVLHPGTPERNTVC), and 144 to 185 (RCPD…DNIC). Intrachain disulfides connect cysteine 41–cysteine 54, cysteine 44–cysteine 62, cysteine 65–cysteine 80, cysteine 83–cysteine 97, cysteine 87–cysteine 105, cysteine 107–cysteine 118, cysteine 124–cysteine 142, and cysteine 145–cysteine 160. N-linked (GlcNAc...) asparagine glycans are attached at residues asparagine 165 and asparagine 178. Cysteines 166 and 185 form a disulfide. 2 Death domains span residues 198–269 (IDMT…DMVK) and 270–365 (KIIQ…VIQS).

Homodimer. Interacts with TNFSF10 and TNFSF11. Post-translationally, N-glycosylated. Contains sialic acid residues.

The protein localises to the secreted. In terms of biological role, acts as a decoy receptor for TNFSF11/RANKL and thereby neutralizes its function in osteoclastogenesis. Inhibits the activation of osteoclasts and promotes osteoclast apoptosis. Bone homeostasis seems to depend on the local ratio between TNFSF11 and TNFRSF11B. May also play a role in preventing arterial calcification. May act as decoy receptor for TNFSF10/TRAIL and protect against apoptosis. TNFSF10/TRAIL binding blocks the inhibition of osteoclastogenesis. This is Tumor necrosis factor receptor superfamily member 11B (TNFRSF11B) from Bos taurus (Bovine).